We begin with the raw amino-acid sequence, 121 residues long: UPF0102 protein BF0706 (121 aa).

It belongs to the UPF0102 family.

This is UPF0102 protein BF0706 from Bacteroides fragilis (strain YCH46).